The chain runs to 185 residues: UPF0669 protein C6orf120 homolog (185 aa).

The first 23 residues, 1 to 23, serve as a signal peptide directing secretion; the sequence is MAARWRRILIVFVAAQVLCLVNT. Residue Asn47 is glycosylated (N-linked (GlcNAc...) asparagine).

It belongs to the UPF0669 family.

It localises to the secreted. The polypeptide is UPF0669 protein C6orf120 homolog (Gallus gallus (Chicken)).